We begin with the raw amino-acid sequence, 63 residues long: Small ribosomal subunit protein eS17 (63 aa).

It belongs to the eukaryotic ribosomal protein eS17 family.

This chain is Small ribosomal subunit protein eS17, found in Methanococcus maripaludis (strain DSM 14266 / JCM 13030 / NBRC 101832 / S2 / LL).